The sequence spans 295 residues: Protein FAM221A (295 aa).

The span at 272-283 (QERLLKEKEQKR) shows a compositional bias: basic and acidic residues. A disordered region spans residues 272 to 295 (QERLLKEKEQKRQKNSKPPTTNRP).

The protein belongs to the FAM221 family.

The sequence is that of Protein FAM221A (fam221a) from Xenopus tropicalis (Western clawed frog).